A 489-amino-acid polypeptide reads, in one-letter code: Aklavinone 12-hydroxylase DnrF (489 aa).

FAD is bound by residues 17–18 (LG), E37, Q121, and L145. Y224 acts as the Proton acceptor in catalysis. Residue D308 coordinates FAD. G317 provides a ligand contact to aklavinone. Residues 402 to 428 (VAAEDDDPEPTEDPRRPSGRPGFRAPH) form a disordered region.

This sequence belongs to the PheA/TfdB FAD monooxygenase family. As to quaternary structure, monomer. The cofactor is FAD.

It carries out the reaction aklavinone + NADPH + O2 + H(+) = epsilon-rhodomycinone + NADP(+) + H2O. It functions in the pathway antibiotic biosynthesis; daunorubicin biosynthesis. It participates in antibiotic biosynthesis; carminomycin biosynthesis. The protein operates within antibiotic biosynthesis; rhodomycin biosynthesis. Its pathway is antibiotic biosynthesis; doxorubicin biosynthesis. Its function is as follows. Involved in the biosynthesis of the anthracyclines carminomycin, rhodomycin, daunorubicin (daunomycin) and doxorubicin (adriamycin) which are aromatic polyketide antibiotics that exhibit high cytotoxicity and are widely applied in the chemotherapy of a variety of cancers. Catalyzes the incorporation of a hydroxyl group at position C-11 of aklavinone, resulting in epsilon-rhodomycinone. This chain is Aklavinone 12-hydroxylase DnrF (dnrF), found in Streptomyces peucetius subsp. caesius.